The chain runs to 101 residues: Large ribosomal subunit protein eL21 (101 aa).

A compositionally biased stretch (basic residues) spans 1 to 18 (MVKHSRGYRTRSRSLLRK). Positions 1–23 (MVKHSRGYRTRSRSLLRKSPRER) are disordered.

It belongs to the eukaryotic ribosomal protein eL21 family.

The sequence is that of Large ribosomal subunit protein eL21 from Saccharolobus islandicus (strain Y.N.15.51 / Yellowstone #2) (Sulfolobus islandicus).